Consider the following 247-residue polypeptide: Uridylate kinase (247 aa).

18 to 21 (KLSG) is an ATP binding site. UMP is bound at residue Gly-60. Residues Gly-61 and Arg-65 each contribute to the ATP site. UMP contacts are provided by residues Asp-80 and 141–148 (TGNPFFTT). ATP contacts are provided by Thr-168, Tyr-174, and Asp-177.

It belongs to the UMP kinase family. Homohexamer.

It localises to the cytoplasm. The catalysed reaction is UMP + ATP = UDP + ADP. It functions in the pathway pyrimidine metabolism; CTP biosynthesis via de novo pathway; UDP from UMP (UMPK route): step 1/1. Its activity is regulated as follows. Inhibited by UTP. In terms of biological role, catalyzes the reversible phosphorylation of UMP to UDP. The chain is Uridylate kinase from Ectopseudomonas mendocina (strain ymp) (Pseudomonas mendocina).